A 108-amino-acid chain; its full sequence is MNSNQHILDELYQVILSRKGASPDSSYTASLLHKGVDKILKKVGEEATEVVIAGKGGTDTELIYETADLLYHGLVLLAARDIPADAVWSELQRRFGTSGIVEKAARKE.

Belongs to the PRA-PH family.

It is found in the cytoplasm. It catalyses the reaction 1-(5-phospho-beta-D-ribosyl)-ATP + H2O = 1-(5-phospho-beta-D-ribosyl)-5'-AMP + diphosphate + H(+). The protein operates within amino-acid biosynthesis; L-histidine biosynthesis; L-histidine from 5-phospho-alpha-D-ribose 1-diphosphate: step 2/9. The chain is Phosphoribosyl-ATP pyrophosphatase from Trichlorobacter lovleyi (strain ATCC BAA-1151 / DSM 17278 / SZ) (Geobacter lovleyi).